The chain runs to 609 residues: Proteasome-associated ATPase (609 aa).

Positions 1–27 are disordered; that stretch reads MGSSERSEAFGTPRESDMSSGDEAELE. Residues 17–96 are a coiled coil; it reads DMSSGDEAEL…LREEVDRLGQ (80 aa). 296-301 serves as a coordination point for ATP; sequence GCGKTL. Positions 608 to 609 are docks into pockets in the proteasome alpha-ring; it reads YL.

Belongs to the AAA ATPase family. Homohexamer. Assembles into a hexameric ring structure that caps the 20S proteasome core. Strongly interacts with the prokaryotic ubiquitin-like protein Pup through a hydrophobic interface; the interacting region of ARC lies in its N-terminal coiled-coil domain. There is one Pup binding site per ARC hexamer ring. Upon ATP-binding, the C-terminus of ARC interacts with the alpha-rings of the proteasome core, possibly by binding to the intersubunit pockets.

It participates in protein degradation; proteasomal Pup-dependent pathway. ATPase which is responsible for recognizing, binding, unfolding and translocation of pupylated proteins into the bacterial 20S proteasome core particle. May be essential for opening the gate of the 20S proteasome via an interaction with its C-terminus, thereby allowing substrate entry and access to the site of proteolysis. Thus, the C-termini of the proteasomal ATPase may function like a 'key in a lock' to induce gate opening and therefore regulate proteolysis. This is Proteasome-associated ATPase from Mycobacterium avium (strain 104).